The primary structure comprises 365 residues: Autoinducer 2-binding periplasmic protein LuxP (365 aa).

The N-terminal stretch at 1 to 23 (MKKALLFSLISMVGFSPASQATQ) is a signal peptide.

This sequence belongs to the bacterial solute-binding protein 2 family.

The protein resides in the periplasm. Functionally, binds to the signaling molecule autoinducer 2 (AI-2), a furanosyl borate diester, (3a-methyl-5,6-dihydrofuro-[2,3d][1,3,2]dioxaborole-2,2,6,6a-tetraol). This complex then interacts with the LuxQ sensor protein. This chain is Autoinducer 2-binding periplasmic protein LuxP (luxP), found in Vibrio harveyi (Beneckea harveyi).